We begin with the raw amino-acid sequence, 383 residues long: Teichoic acid glycerol-phosphate primase (383 aa).

The protein belongs to the CDP-glycerol glycerophosphotransferase family.

It localises to the cell membrane. It catalyses the reaction N-acetyl-beta-D-mannosaminyl-(1-&gt;4)-N-acetyl-alpha-D-glucosaminyl di-trans,octa-cis-undecaprenyl diphosphate + CDP-glycerol = 4-O-[(2R)-glycerylphospho]-N-acetyl-beta-D-mannosaminyl-(1-&gt;4)-N-acetyl-alpha-D-glucosaminyl di-trans,octa-cis-undecaprenyl diphosphate + CMP + H(+). It functions in the pathway cell wall biogenesis; poly(ribitol phosphate) teichoic acid biosynthesis. Functionally, catalyzes the addition of a single glycerol phosphate residue to the prenoldiphosphate-linked disaccharide. In Bacillus spizizenii (strain ATCC 23059 / NRRL B-14472 / W23) (Bacillus subtilis subsp. spizizenii), this protein is Teichoic acid glycerol-phosphate primase (tarB).